Reading from the N-terminus, the 122-residue chain is Cytochrome b-c1 complex subunit 7-2, mitochondrial (122 aa).

This sequence belongs to the UQCRB/QCR7 family. As to quaternary structure, component of the ubiquinol-cytochrome c oxidoreductase (cytochrome b-c1 complex, complex III, CIII), a multisubunit enzyme composed of 10 subunits. The complex is composed of 3 respiratory subunits cytochrome b (MT-CYB), cytochrome c1 (CYC1-1 or CYC1-2) and Rieske protein (UCR1-1 or UCR1-2), 2 core protein subunits MPPalpha1 (or MPPalpha2) and MPPB, and 5 low-molecular weight protein subunits QCR7-1 (or QCR7-2), UCRQ-1 (or UCRQ-2), QCR9, UCRY and probably QCR6-1 (or QCR6-2). The complex exists as an obligatory dimer and forms supercomplexes (SCs) in the inner mitochondrial membrane with NADH-ubiquinone oxidoreductase (complex I, CI), resulting in different assemblies (supercomplexes SCI(1)III(2) and SCI(2)III(4)).

The protein localises to the mitochondrion inner membrane. In terms of biological role, component of the ubiquinol-cytochrome c oxidoreductase, a multisubunit transmembrane complex that is part of the mitochondrial electron transport chain which drives oxidative phosphorylation. The respiratory chain contains 3 multisubunit complexes succinate dehydrogenase (complex II, CII), ubiquinol-cytochrome c oxidoreductase (cytochrome b-c1 complex, complex III, CIII) and cytochrome c oxidase (complex IV, CIV), that cooperate to transfer electrons derived from NADH and succinate to molecular oxygen, creating an electrochemical gradient over the inner membrane that drives transmembrane transport and the ATP synthase. The cytochrome b-c1 complex catalyzes electron transfer from ubiquinol to cytochrome c, linking this redox reaction to translocation of protons across the mitochondrial inner membrane, with protons being carried across the membrane as hydrogens on the quinol. In the process called Q cycle, 2 protons are consumed from the matrix, 4 protons are released into the intermembrane space and 2 electrons are passed to cytochrome c. This is Cytochrome b-c1 complex subunit 7-2, mitochondrial (QCR7-2) from Arabidopsis thaliana (Mouse-ear cress).